The following is a 163-amino-acid chain: Protein NAG1 (163 aa).

Residues 76–96 (ACFSVRIVLPLSLTISISALM) form a helical membrane-spanning segment.

It localises to the membrane. Functionally, involved in yeast cell wall biogenesis. This is Protein NAG1 (NAG1) from Saccharomyces cerevisiae (strain ATCC 204508 / S288c) (Baker's yeast).